A 696-amino-acid polypeptide reads, in one-letter code: Elongation factor G (696 aa).

Positions 8-286 (EDVRNIGIAA…AVVHYLPSPV (279 aa)) constitute a tr-type G domain. Residues 17-24 (AHIDAGKT), 81-85 (DTPGH), and 135-138 (NKMD) contribute to the GTP site.

It belongs to the TRAFAC class translation factor GTPase superfamily. Classic translation factor GTPase family. EF-G/EF-2 subfamily.

Its subcellular location is the cytoplasm. Its function is as follows. Catalyzes the GTP-dependent ribosomal translocation step during translation elongation. During this step, the ribosome changes from the pre-translocational (PRE) to the post-translocational (POST) state as the newly formed A-site-bound peptidyl-tRNA and P-site-bound deacylated tRNA move to the P and E sites, respectively. Catalyzes the coordinated movement of the two tRNA molecules, the mRNA and conformational changes in the ribosome. This is Elongation factor G from Sulfurovum sp. (strain NBC37-1).